The following is a 250-amino-acid chain: Homeobox protein Dlx4a (250 aa).

Residues 123 to 182 (IRKPRTIYSSLQLQALNQRFQQTQYLALPERADLAAKLGLTQTQVKIWFQNKRSKYKKIM) constitute a DNA-binding region (homeobox). The segment at 182-202 (MKHGSSGPEGEHLQAASASGA) is disordered.

It belongs to the distal-less homeobox family.

It is found in the nucleus. This Danio rerio (Zebrafish) protein is Homeobox protein Dlx4a (dlx4a).